A 91-amino-acid chain; its full sequence is Acylphosphatase (91 aa).

One can recognise an Acylphosphatase-like domain in the interval 5–91 (CLHAYVGGRV…QGIAGFIVRR (87 aa)). Active-site residues include Arg-20 and Asn-38.

It belongs to the acylphosphatase family.

The enzyme catalyses an acyl phosphate + H2O = a carboxylate + phosphate + H(+). The sequence is that of Acylphosphatase (acyP) from Pseudomonas paraeruginosa (strain DSM 24068 / PA7) (Pseudomonas aeruginosa (strain PA7)).